Consider the following 207-residue polypeptide: Ribonuclease HII (207 aa).

An RNase H type-2 domain is found at 10 to 199 (RLIAGVDEVG…VRNALLDAEL (190 aa)). Positions 16, 17, and 108 each coordinate a divalent metal cation.

It belongs to the RNase HII family. Requires Mn(2+) as cofactor. Mg(2+) is required as a cofactor.

It is found in the cytoplasm. The enzyme catalyses Endonucleolytic cleavage to 5'-phosphomonoester.. Its function is as follows. Endonuclease that specifically degrades the RNA of RNA-DNA hybrids. This Erwinia tasmaniensis (strain DSM 17950 / CFBP 7177 / CIP 109463 / NCPPB 4357 / Et1/99) protein is Ribonuclease HII.